The following is a 279-amino-acid chain: NH(3)-dependent NAD(+) synthetase (279 aa).

46–53 (GISGGQDS) serves as a coordination point for ATP. D52 contributes to the Mg(2+) binding site. R145 lines the deamido-NAD(+) pocket. An ATP-binding site is contributed by T165. E170 lines the Mg(2+) pocket. Residues K178 and D185 each contribute to the deamido-NAD(+) site. Positions 194 and 216 each coordinate ATP. Position 265 to 266 (265 to 266 (HK)) interacts with deamido-NAD(+).

This sequence belongs to the NAD synthetase family. As to quaternary structure, homodimer.

The catalysed reaction is deamido-NAD(+) + NH4(+) + ATP = AMP + diphosphate + NAD(+) + H(+). It functions in the pathway cofactor biosynthesis; NAD(+) biosynthesis; NAD(+) from deamido-NAD(+) (ammonia route): step 1/1. Its function is as follows. Catalyzes the ATP-dependent amidation of deamido-NAD to form NAD. Uses ammonia as a nitrogen source. The chain is NH(3)-dependent NAD(+) synthetase from Rhodococcus opacus (strain B4).